The primary structure comprises 324 residues: Lipoyl synthase (324 aa).

[4Fe-4S] cluster-binding residues include C72, C77, C83, C98, C102, C105, and S313. The Radical SAM core domain maps to 84 to 302 (FRFGTASFMI…AQEGKKMGFL (219 aa)).

It belongs to the radical SAM superfamily. Lipoyl synthase family. The cofactor is [4Fe-4S] cluster.

Its subcellular location is the cytoplasm. It catalyses the reaction [[Fe-S] cluster scaffold protein carrying a second [4Fe-4S](2+) cluster] + N(6)-octanoyl-L-lysyl-[protein] + 2 oxidized [2Fe-2S]-[ferredoxin] + 2 S-adenosyl-L-methionine + 4 H(+) = [[Fe-S] cluster scaffold protein] + N(6)-[(R)-dihydrolipoyl]-L-lysyl-[protein] + 4 Fe(3+) + 2 hydrogen sulfide + 2 5'-deoxyadenosine + 2 L-methionine + 2 reduced [2Fe-2S]-[ferredoxin]. It functions in the pathway protein modification; protein lipoylation via endogenous pathway; protein N(6)-(lipoyl)lysine from octanoyl-[acyl-carrier-protein]: step 2/2. Catalyzes the radical-mediated insertion of two sulfur atoms into the C-6 and C-8 positions of the octanoyl moiety bound to the lipoyl domains of lipoate-dependent enzymes, thereby converting the octanoylated domains into lipoylated derivatives. The chain is Lipoyl synthase from Dichelobacter nodosus (strain VCS1703A).